The primary structure comprises 209 residues: Thiamine-phosphate synthase (209 aa).

Residues 35–39 (QLRNK) and N67 each bind 4-amino-2-methyl-5-(diphosphooxymethyl)pyrimidine. Positions 68 and 87 each coordinate Mg(2+). S106 serves as a coordination point for 4-amino-2-methyl-5-(diphosphooxymethyl)pyrimidine. Residue 132 to 134 (TGS) coordinates 2-[(2R,5Z)-2-carboxy-4-methylthiazol-5(2H)-ylidene]ethyl phosphate. K135 provides a ligand contact to 4-amino-2-methyl-5-(diphosphooxymethyl)pyrimidine. Residues G163 and 183–184 (IS) contribute to the 2-[(2R,5Z)-2-carboxy-4-methylthiazol-5(2H)-ylidene]ethyl phosphate site.

The protein belongs to the thiamine-phosphate synthase family. Mg(2+) serves as cofactor.

It carries out the reaction 2-[(2R,5Z)-2-carboxy-4-methylthiazol-5(2H)-ylidene]ethyl phosphate + 4-amino-2-methyl-5-(diphosphooxymethyl)pyrimidine + 2 H(+) = thiamine phosphate + CO2 + diphosphate. The catalysed reaction is 2-(2-carboxy-4-methylthiazol-5-yl)ethyl phosphate + 4-amino-2-methyl-5-(diphosphooxymethyl)pyrimidine + 2 H(+) = thiamine phosphate + CO2 + diphosphate. It catalyses the reaction 4-methyl-5-(2-phosphooxyethyl)-thiazole + 4-amino-2-methyl-5-(diphosphooxymethyl)pyrimidine + H(+) = thiamine phosphate + diphosphate. It participates in cofactor biosynthesis; thiamine diphosphate biosynthesis; thiamine phosphate from 4-amino-2-methyl-5-diphosphomethylpyrimidine and 4-methyl-5-(2-phosphoethyl)-thiazole: step 1/1. In terms of biological role, condenses 4-methyl-5-(beta-hydroxyethyl)thiazole monophosphate (THZ-P) and 2-methyl-4-amino-5-hydroxymethyl pyrimidine pyrophosphate (HMP-PP) to form thiamine monophosphate (TMP). The polypeptide is Thiamine-phosphate synthase (Chlorobium phaeovibrioides (strain DSM 265 / 1930) (Prosthecochloris vibrioformis (strain DSM 265))).